The primary structure comprises 297 residues: Cell division protein FtsQ (297 aa).

Residues 1–33 (MRPLSFRRRTAQARPDPAPSRLSYRVQRLLLTP) lie on the Cytoplasmic side of the membrane. Residues 34–54 (LFHALIRVGLPAFVLAFGVGW) form a helical membrane-spanning segment. Over 55–297 (LLQNQELRDE…IRGLTNDRIE (243 aa)) the chain is Periplasmic. The region spanning 82-150 (FMVNAMSVSG…GILAIEIVER (69 aa)) is the POTRA domain.

The protein belongs to the FtsQ/DivIB family. FtsQ subfamily.

It is found in the cell inner membrane. Its function is as follows. Essential cell division protein. This chain is Cell division protein FtsQ, found in Dinoroseobacter shibae (strain DSM 16493 / NCIMB 14021 / DFL 12).